The following is a 225-amino-acid chain: Membrane protein (225 aa).

The Virion surface segment spans residues 1–20 (MPNETNCTLDFEQSVQLFKE). A helical membrane pass occupies residues 21 to 41 (YNLFITAFLLFLTIILQYGYA). The Intravirion portion of the chain corresponds to 42-51 (TRSKVIYTLK). The chain crosses the membrane as a helical span at residues 52 to 72 (MIVLWCFWPLNIAVGVISCTY). The Virion surface segment spans residues 73-77 (PPNTG). A helical membrane pass occupies residues 78–98 (GLVAAIILTVFACLSFVGYWI). Topologically, residues 99–225 (QSIRLFKRCR…VATGGSSLYT (127 aa)) are intravirion.

This sequence belongs to the gammacoronaviruses M protein family. In terms of assembly, homomultimer. Interacts with envelope E protein in the budding compartment of the host cell, which is located between endoplasmic reticulum and the Golgi complex. Forms a complex with HE and S proteins. Interacts with nucleocapsid N protein. This interaction probably participates in RNA packaging into the virus.

The protein resides in the virion membrane. It is found in the host Golgi apparatus membrane. Its function is as follows. Component of the viral envelope that plays a central role in virus morphogenesis and assembly via its interactions with other viral proteins. The sequence is that of Membrane protein from Avian infectious bronchitis virus (strain Beaudette) (IBV).